The chain runs to 497 residues: MDVMKYNDLRDFLTLLEQQGELKRITLPVDPHLEITEIADRTLRAGGPALLFENPKGYSMPVLCNLFGTPKRVAMGMGQEDVSALREVGKLLAFLKEPEPPKGFRDLFDKLPQFKQVLNMPTKRLRGAPCQQKIVSGDDVDLHRIPIMTCWPGDAAPLITWGLTVTRRPHKERQNLGIYRQQLIGKNKLIMRWLSHRGGALDYQEWCAAHPGERFPVSVALGADPATILGAVTPVPDTLSEYAFAGLLRGTKTEVVKCISNDLEVPASAEIVLEGYIEQGETAPEGPYGDHTGYYNEVDSFPVFTVTHITQREDAIYHSTYTGRPPDEPAVLGVALNEVFVPILQKQFPEIVDFYLPPEGCSYRLAVVTIKKQYAGHAKRVMMGVWSFLRQFMYTKFVIVCDDDVNARDWNDVIWAITTRMDPARDTVLVENTPIDYLDFASPVSGLGSKMGLDATNKWPGETQREWGRPIKKDPDVVAHIDAIWDELAIFNNGKSA.

N175 contributes to the Mn(2+) binding site. Residues 178–180, 192–194, and 197–198 each bind prenylated FMN; these read IYR, RWL, and RG. E241 serves as a coordination point for Mn(2+). D290 serves as the catalytic Proton donor.

The protein belongs to the UbiD family. In terms of assembly, homohexamer. Prenylated FMN serves as cofactor. It depends on Mn(2+) as a cofactor.

Its subcellular location is the cell membrane. It carries out the reaction a 4-hydroxy-3-(all-trans-polyprenyl)benzoate + H(+) = a 2-(all-trans-polyprenyl)phenol + CO2. Its pathway is cofactor biosynthesis; ubiquinone biosynthesis. Functionally, catalyzes the decarboxylation of 3-octaprenyl-4-hydroxy benzoate to 2-octaprenylphenol, an intermediate step in ubiquinone biosynthesis. The polypeptide is 3-octaprenyl-4-hydroxybenzoate carboxy-lyase (Shigella dysenteriae serotype 1 (strain Sd197)).